The following is a 248-amino-acid chain: Cytochrome c oxidase subunit 2 (248 aa).

The signal sequence occupies residues 1–12 (MLLMNLFTIINN). Topologically, residues 13-39 (DVPTPYNMYFQDSTTPHQEGILELHDN) are mitochondrial intermembrane. Residues 40 to 61 (IMFYMLTVLGLVSWMMIIIIKD) form a helical membrane-spanning segment. Topologically, residues 62 to 79 (YKNNPITYKYIKHGQMIE) are mitochondrial matrix. The helical transmembrane segment at 80–104 (IIWTILPAIILLMIAFPSFILLYLC) threads the bilayer. Residues 105 to 248 (DEVISPAMTI…PTFLTWLNEQ (144 aa)) lie on the Mitochondrial intermembrane side of the membrane. Residues His183, Cys218, Glu220, Cys222, His226, and Met229 each coordinate Cu cation. Glu220 lines the Mg(2+) pocket.

The protein belongs to the cytochrome c oxidase subunit 2 family. In terms of assembly, component of the cytochrome c oxidase (complex IV, CIV), a multisubunit enzyme composed of a catalytic core of 3 subunits and several supernumerary subunits. The complex exists as a monomer or a dimer and forms supercomplexes (SCs) in the inner mitochondrial membrane with ubiquinol-cytochrome c oxidoreductase (cytochrome b-c1 complex, complex III, CIII). Requires Cu cation as cofactor. The signal sequence of COX2 is processed by IMP1.

It is found in the mitochondrion inner membrane. It carries out the reaction 4 Fe(II)-[cytochrome c] + O2 + 8 H(+)(in) = 4 Fe(III)-[cytochrome c] + 2 H2O + 4 H(+)(out). Component of the cytochrome c oxidase, the last enzyme in the mitochondrial electron transport chain which drives oxidative phosphorylation. The respiratory chain contains 3 multisubunit complexes succinate dehydrogenase (complex II, CII), ubiquinol-cytochrome c oxidoreductase (cytochrome b-c1 complex, complex III, CIII) and cytochrome c oxidase (complex IV, CIV), that cooperate to transfer electrons derived from NADH and succinate to molecular oxygen, creating an electrochemical gradient over the inner membrane that drives transmembrane transport and the ATP synthase. Cytochrome c oxidase is the component of the respiratory chain that catalyzes the reduction of oxygen to water. Electrons originating from reduced cytochrome c in the intermembrane space (IMS) are transferred via the dinuclear copper A center (CU(A)) of subunit 2 and heme A of subunit 1 to the active site in subunit 1, a binuclear center (BNC) formed by heme A3 and copper B (CU(B)). The BNC reduces molecular oxygen to 2 water molecules using 4 electrons from cytochrome c in the IMS and 4 protons from the mitochondrial matrix. The protein is Cytochrome c oxidase subunit 2 (COX2) of Eremothecium gossypii (strain ATCC 10895 / CBS 109.51 / FGSC 9923 / NRRL Y-1056) (Yeast).